Reading from the N-terminus, the 649-residue chain is Transmembrane and coiled-coil domains protein 1 (649 aa).

An N-acetylmethionine modification is found at Met-1. Disordered regions lie at residues 1-37, 58-83, 110-166, and 197-222; these read MEPS…LSKM, HQRR…EVDL, RVPP…PTSS, and LAQT…GIPD. Topologically, residues 1-587 are cytoplasmic; that stretch reads MEPSGSEQLY…ARNLLGKLIN (587 aa). Residues 20–34 show a composition bias toward basic and acidic residues; the sequence is QDAEARRQTESEQKL. The segment covering 64 to 75 has biased composition (polar residues); the sequence is SVSPHDVQQIQT. The span at 113–125 shows a compositional bias: basic residues; the sequence is PKMKRGTSLHSRR. Low complexity predominate over residues 156-166; sequence SSSTTDAPTSS. The span at 197–214 shows a compositional bias: polar residues; sequence LAQTSSAVASSTDGSIHT. A coiled-coil region spans residues 224–310; sequence QRTKAAIAHL…KLREVEQNGI (87 aa). 2 positions are modified to phosphoserine: Ser-378 and Ser-410. The segment at 411-433 is disordered; that stretch reads PKYGSEEDCSSATSGSVGANSTT. The span at 420-433 shows a compositional bias: polar residues; that stretch reads SSATSGSVGANSTT. Residues 457–566 adopt a coiled-coil conformation; it reads ALLHEVQEIR…KMELQQQQQQ (110 aa). Helical transmembrane passes span 588-608 and 621-641; these read ILLA…NCVV and LFLV…FSYV. The Cytoplasmic portion of the chain corresponds to 642–649; it reads DRLFSPPR.

This sequence belongs to the TEX28 family. May form homodimers and heterodimers with TMCC2 or TMCC3 via the coiled-coil domains. Interacts with ribosomal proteins RPL4 and RPS6.

Its subcellular location is the endoplasmic reticulum membrane. Its function is as follows. Endoplasmic reticulum membrane protein that promotes endoplasmic reticulum-associated endosome fission. Localizes to contact sites between the endoplasmic reticulum and endosomes and acts by promoting recruitment of the endoplasmic reticulum to endosome tubules for fission. Endosome membrane fission of early and late endosomes is essential to separate regions destined for lysosomal degradation from carriers to be recycled to the plasma membrane. In Mus musculus (Mouse), this protein is Transmembrane and coiled-coil domains protein 1 (Tmcc1).